The following is an 81-amino-acid chain: Acyl carrier protein (81 aa).

Positions 1–79 constitute a Carrier domain; the sequence is MDVAAMQVKI…DIFDYLAKNK (79 aa). An O-(pantetheine 4'-phosphoryl)serine modification is found at serine 39.

It belongs to the acyl carrier protein (ACP) family. Post-translationally, 4'-phosphopantetheine is transferred from CoA to a specific serine of apo-ACP by AcpS. This modification is essential for activity because fatty acids are bound in thioester linkage to the sulfhydryl of the prosthetic group.

Its subcellular location is the cytoplasm. It participates in lipid metabolism; fatty acid biosynthesis. Its function is as follows. Carrier of the growing fatty acid chain in fatty acid biosynthesis. This Syntrophobacter fumaroxidans (strain DSM 10017 / MPOB) protein is Acyl carrier protein.